The sequence spans 120 residues: Ribonuclease P protein component (120 aa).

Belongs to the RnpA family. As to quaternary structure, consists of a catalytic RNA component (M1 or rnpB) and a protein subunit.

It catalyses the reaction Endonucleolytic cleavage of RNA, removing 5'-extranucleotides from tRNA precursor.. Functionally, RNaseP catalyzes the removal of the 5'-leader sequence from pre-tRNA to produce the mature 5'-terminus. It can also cleave other RNA substrates such as 4.5S RNA. The protein component plays an auxiliary but essential role in vivo by binding to the 5'-leader sequence and broadening the substrate specificity of the ribozyme. In Acidothermus cellulolyticus (strain ATCC 43068 / DSM 8971 / 11B), this protein is Ribonuclease P protein component.